Here is a 197-residue protein sequence, read N- to C-terminus: A-type ATP synthase subunit E 2 (197 aa).

The protein belongs to the V-ATPase E subunit family. As to quaternary structure, has multiple subunits with at least A(3), B(3), C, D, E, F, H, I and proteolipid K(x).

The protein localises to the cell membrane. Component of the A-type ATP synthase that produces ATP from ADP in the presence of a proton gradient across the membrane. In Methanospirillum hungatei JF-1 (strain ATCC 27890 / DSM 864 / NBRC 100397 / JF-1), this protein is A-type ATP synthase subunit E 2.